Consider the following 492-residue polypeptide: Glutamyl-tRNA(Gln) amidotransferase subunit A (492 aa).

Catalysis depends on charge relay system residues Lys-79 and Ser-154. Ser-178 acts as the Acyl-ester intermediate in catalysis.

This sequence belongs to the amidase family. GatA subfamily. In terms of assembly, heterotrimer of A, B and C subunits.

The enzyme catalyses L-glutamyl-tRNA(Gln) + L-glutamine + ATP + H2O = L-glutaminyl-tRNA(Gln) + L-glutamate + ADP + phosphate + H(+). Its function is as follows. Allows the formation of correctly charged Gln-tRNA(Gln) through the transamidation of misacylated Glu-tRNA(Gln) in organisms which lack glutaminyl-tRNA synthetase. The reaction takes place in the presence of glutamine and ATP through an activated gamma-phospho-Glu-tRNA(Gln). The sequence is that of Glutamyl-tRNA(Gln) amidotransferase subunit A from Acinetobacter baylyi (strain ATCC 33305 / BD413 / ADP1).